The primary structure comprises 876 residues: Alanine--tRNA ligase (876 aa).

The residue at position 74 (Lys-74) is an N6-acetyllysine. His-564, His-568, Cys-666, and His-670 together coordinate Zn(2+).

It belongs to the class-II aminoacyl-tRNA synthetase family. Homotetramer. The cofactor is Zn(2+).

The protein localises to the cytoplasm. It catalyses the reaction tRNA(Ala) + L-alanine + ATP = L-alanyl-tRNA(Ala) + AMP + diphosphate. Functionally, catalyzes the attachment of alanine to tRNA(Ala) in a two-step reaction: alanine is first activated by ATP to form Ala-AMP and then transferred to the acceptor end of tRNA(Ala). Also edits incorrectly charged Ser-tRNA(Ala) and Gly-tRNA(Ala) via its editing domain. The sequence is that of Alanine--tRNA ligase from Shigella flexneri serotype 5b (strain 8401).